The following is a 185-amino-acid chain: Endonuclease IV (185 aa).

The catalysed reaction is Endonucleolytic cleavage of the 5' phosphodiester bond of deoxycytidine in single-stranded DNA.. Functionally, cleaves single-stranded DNA in a dC-specific manner. The cleavage occurs exclusively at the 5'-proximal position (dC1) within a dCs tract having a minimal size of 6 bases. These specific cleavages may have a detrimental effect on the replication of host dC-containing DNA. In Enterobacteria phage T4 (Bacteriophage T4), this protein is Endonuclease IV (denB).